We begin with the raw amino-acid sequence, 312 residues long: MIGSVKRPVVSCVLPEFDFTESTGLGKKSSSVKLPVNFGAFGSGGGEVKLGFLAPIKATEGSKTSSFQVNGKVDNFRHLQPSDCNSNSDSSLNNCNGFPGKKILQTTTVGNSTNILWHKCAVEKSERQEPLQQRGCVIWITGLSGSGKSTLACALSRGLHAKGKLTYILDGDNVRHGLNSDLSFKAEDRAENIRRIGEVAKLFADAGVICIASLISPYRKPPDACRSLLPEGDFIEVFMDVPLKVCEARDPKGLYKLARAGKIKGFTGIDDPYEPPLKSEIVLHQKLGMCDSPCDLADIVISYLEENGYLKA.

142-149 (GLSGSGKS) contacts ATP. Catalysis depends on Ser-216, which acts as the Phosphoserine intermediate.

It belongs to the APS kinase family.

The protein resides in the plastid. Its subcellular location is the chloroplast. It carries out the reaction adenosine 5'-phosphosulfate + ATP = 3'-phosphoadenylyl sulfate + ADP + H(+). It participates in sulfur metabolism; hydrogen sulfide biosynthesis; sulfite from sulfate: step 2/3. Its function is as follows. Catalyzes the synthesis of activated sulfate. The sequence is that of Adenylyl-sulfate kinase, chloroplastic (AKN) from Catharanthus roseus (Madagascar periwinkle).